The primary structure comprises 196 residues: SPRY domain-containing protein 7 (196 aa).

Ala2 is modified (N-acetylalanine). In terms of domain architecture, B30.2/SPRY spans 2 to 184 (AASVFCCLRC…FSEFYHTPPP (183 aa)).

This is SPRY domain-containing protein 7 (SPRYD7) from Bos taurus (Bovine).